The following is a 314-amino-acid chain: tRNA dimethylallyltransferase (314 aa).

12 to 19 (GPTAGGKS) is a binding site for ATP. 14 to 19 (TAGGKS) is a binding site for substrate. The segment at 37–40 (DSMQ) is interaction with substrate tRNA.

Belongs to the IPP transferase family. As to quaternary structure, monomer. Mg(2+) is required as a cofactor.

It catalyses the reaction adenosine(37) in tRNA + dimethylallyl diphosphate = N(6)-dimethylallyladenosine(37) in tRNA + diphosphate. Catalyzes the transfer of a dimethylallyl group onto the adenine at position 37 in tRNAs that read codons beginning with uridine, leading to the formation of N6-(dimethylallyl)adenosine (i(6)A). The polypeptide is tRNA dimethylallyltransferase (Rhodospirillum centenum (strain ATCC 51521 / SW)).